A 312-amino-acid polypeptide reads, in one-letter code: Aspartate carbamoyltransferase catalytic subunit (312 aa).

Carbamoyl phosphate contacts are provided by Arg-55 and Thr-56. Lys-83 lines the L-aspartate pocket. Carbamoyl phosphate contacts are provided by Arg-105, His-138, and Gln-141. L-aspartate contacts are provided by Arg-171 and Arg-225. Carbamoyl phosphate-binding residues include Gly-266 and Pro-267.

It belongs to the aspartate/ornithine carbamoyltransferase superfamily. ATCase family. Heterododecamer (2C3:3R2) of six catalytic PyrB chains organized as two trimers (C3), and six regulatory PyrI chains organized as three dimers (R2).

The catalysed reaction is carbamoyl phosphate + L-aspartate = N-carbamoyl-L-aspartate + phosphate + H(+). It participates in pyrimidine metabolism; UMP biosynthesis via de novo pathway; (S)-dihydroorotate from bicarbonate: step 2/3. In terms of biological role, catalyzes the condensation of carbamoyl phosphate and aspartate to form carbamoyl aspartate and inorganic phosphate, the committed step in the de novo pyrimidine nucleotide biosynthesis pathway. This Corynebacterium glutamicum (strain ATCC 13032 / DSM 20300 / JCM 1318 / BCRC 11384 / CCUG 27702 / LMG 3730 / NBRC 12168 / NCIMB 10025 / NRRL B-2784 / 534) protein is Aspartate carbamoyltransferase catalytic subunit.